The sequence spans 467 residues: tRNA modification GTPase MnmE (467 aa).

(6S)-5-formyl-5,6,7,8-tetrahydrofolate contacts are provided by Arg-25, Glu-87, and Lys-130. In terms of domain architecture, TrmE-type G spans 226–389 (GLSVVLAGQP…LRGELLRIAG (164 aa)). Asn-236 contributes to the K(+) binding site. Residues 236–241 (NVGKSS), 255–261 (TPIAGTT), and 280–283 (DTAG) each bind GTP. Ser-240 contacts Mg(2+). The K(+) site is built by Thr-255, Ile-257, and Thr-260. Thr-261 contributes to the Mg(2+) binding site. Lys-467 contacts (6S)-5-formyl-5,6,7,8-tetrahydrofolate.

The protein belongs to the TRAFAC class TrmE-Era-EngA-EngB-Septin-like GTPase superfamily. TrmE GTPase family. In terms of assembly, homodimer. Heterotetramer of two MnmE and two MnmG subunits. It depends on K(+) as a cofactor.

It localises to the cytoplasm. In terms of biological role, exhibits a very high intrinsic GTPase hydrolysis rate. Involved in the addition of a carboxymethylaminomethyl (cmnm) group at the wobble position (U34) of certain tRNAs, forming tRNA-cmnm(5)s(2)U34. The chain is tRNA modification GTPase MnmE from Burkholderia thailandensis (strain ATCC 700388 / DSM 13276 / CCUG 48851 / CIP 106301 / E264).